The sequence spans 554 residues: Potassium/proton antiporter CemA (554 aa).

Residues 50–70 (SLFVVLFIPFFINIFTKIYVF) traverse the membrane as a helical segment. The tract at residues 113–410 (KTENFFPEKP…VPYNFNKNTE (298 aa)) is insert. Transmembrane regions (helical) follow at residues 429 to 449 (ISAI…LFLL), 479 to 499 (MLLF…EVIF), and 514 to 534 (IIFL…KYWI).

It belongs to the CemA family.

Its subcellular location is the plastid. It is found in the chloroplast inner membrane. The catalysed reaction is K(+)(in) + H(+)(out) = K(+)(out) + H(+)(in). Its function is as follows. Contributes to K(+)/H(+) antiport activity by supporting proton efflux to control proton extrusion and homeostasis in chloroplasts in a light-dependent manner to modulate photosynthesis. Prevents excessive induction of non-photochemical quenching (NPQ) under continuous-light conditions. Indirectly promotes efficient inorganic carbon uptake into chloroplasts. The polypeptide is Potassium/proton antiporter CemA (Stigeoclonium helveticum (Green alga)).